The following is a 51-amino-acid chain: Insulin (51 aa).

3 disulfides stabilise this stretch: Cys-8–Cys-37, Cys-20–Cys-50, and Cys-36–Cys-41.

The protein belongs to the insulin family. In terms of assembly, heterodimer of a B chain and an A chain linked by two disulfide bonds.

It localises to the secreted. In terms of biological role, insulin decreases blood glucose concentration. It increases cell permeability to monosaccharides, amino acids and fatty acids. It accelerates glycolysis, the pentose phosphate cycle, and glycogen synthesis in liver. The chain is Insulin (ins) from Gadus morhua subsp. callarias (Baltic cod).